The following is a 421-amino-acid chain: Tyrosine--tRNA ligase 1 (421 aa).

Tyrosine 35 contributes to the L-tyrosine binding site. Positions proline 40–histidine 49 match the 'HIGH' region motif. 2 residues coordinate L-tyrosine: tyrosine 170 and glutamine 174. The 'KMSKS' region signature appears at lysine 231–threonine 235. ATP is bound at residue lysine 234. Positions leucine 354–tyrosine 420 constitute an S4 RNA-binding domain.

It belongs to the class-I aminoacyl-tRNA synthetase family. TyrS type 1 subfamily. As to quaternary structure, homodimer.

It is found in the cytoplasm. It carries out the reaction tRNA(Tyr) + L-tyrosine + ATP = L-tyrosyl-tRNA(Tyr) + AMP + diphosphate + H(+). In terms of biological role, catalyzes the attachment of tyrosine to tRNA(Tyr) in a two-step reaction: tyrosine is first activated by ATP to form Tyr-AMP and then transferred to the acceptor end of tRNA(Tyr). The sequence is that of Tyrosine--tRNA ligase 1 from Bacillus licheniformis (strain ATCC 14580 / DSM 13 / JCM 2505 / CCUG 7422 / NBRC 12200 / NCIMB 9375 / NCTC 10341 / NRRL NRS-1264 / Gibson 46).